The following is a 369-amino-acid chain: Glutamate 5-kinase (369 aa).

Lysine 11 serves as a coordination point for ATP. Serine 51, aspartate 138, and asparagine 150 together coordinate substrate. ATP is bound by residues 170-171 and 212-218; these read TD and TGGMATK. In terms of domain architecture, PUA spans 277–355; it reads NGTIVIDDGA…QDIYAVLGYE (79 aa).

It belongs to the glutamate 5-kinase family.

Its subcellular location is the cytoplasm. It catalyses the reaction L-glutamate + ATP = L-glutamyl 5-phosphate + ADP. The protein operates within amino-acid biosynthesis; L-proline biosynthesis; L-glutamate 5-semialdehyde from L-glutamate: step 1/2. In terms of biological role, catalyzes the transfer of a phosphate group to glutamate to form L-glutamate 5-phosphate. The chain is Glutamate 5-kinase from Aliivibrio salmonicida (strain LFI1238) (Vibrio salmonicida (strain LFI1238)).